The chain runs to 730 residues: Jacalin-related lectin 5 (730 aa).

The Jacalin-type lectin 1 domain occupies 1-126 (MSWDDGKHTK…LNSIDAHFAP (126 aa)). The segment at 121 to 450 (DAHFAPAPPP…GNQWDDGTDH (330 aa)) is disordered. Composition is skewed to low complexity over residues 138–153 (GASG…GSAG), 168–179 (AGGSKPSSGSAG), 196–207 (AGGSKPSSGSAG), and 248–261 (TEKN…SSGS). Residues 275 to 307 (ETVSNIGDTESNAGGSKSNDGANNGASGIESNA) show a composition bias toward polar residues. A compositionally biased stretch (gly residues) spans 314 to 323 (FGAGGTGGIG). A compositionally biased stretch (low complexity) spans 343-358 (DGASGIGSNDGSTGTN). Polar residues-rich tracts occupy residues 366-375 (DSNIEGTENN) and 388-416 (IGNS…TGGK). The span at 417-429 (ESNTGSESNTNSS) shows a compositional bias: low complexity. Jacalin-type lectin domains lie at 430-572 (PQKL…YFVP) and 584-727 (PNKV…YFIP).

It belongs to the jacalin lectin family.

The polypeptide is Jacalin-related lectin 5 (JAL5) (Arabidopsis thaliana (Mouse-ear cress)).